A 506-amino-acid polypeptide reads, in one-letter code: Exopolysaccharide phosphotransferase NFA_48680 (506 aa).

Residues 484–506 (PAPWERVSAPSRRPLPESTAGAA) are disordered.

The protein belongs to the stealth family.

The protein is Exopolysaccharide phosphotransferase NFA_48680 of Nocardia farcinica (strain IFM 10152).